Consider the following 392-residue polypeptide: NADH-quinone oxidoreductase subunit D (392 aa).

Belongs to the complex I 49 kDa subunit family. As to quaternary structure, NDH-1 is composed of 14 different subunits. Subunits NuoB, C, D, E, F, and G constitute the peripheral sector of the complex.

It is found in the cell inner membrane. The enzyme catalyses a quinone + NADH + 5 H(+)(in) = a quinol + NAD(+) + 4 H(+)(out). Its function is as follows. NDH-1 shuttles electrons from NADH, via FMN and iron-sulfur (Fe-S) centers, to quinones in the respiratory chain. The immediate electron acceptor for the enzyme in this species is believed to be ubiquinone. Couples the redox reaction to proton translocation (for every two electrons transferred, four hydrogen ions are translocated across the cytoplasmic membrane), and thus conserves the redox energy in a proton gradient. The chain is NADH-quinone oxidoreductase subunit D from Paramagnetospirillum magneticum (strain ATCC 700264 / AMB-1) (Magnetospirillum magneticum).